The following is a 153-amino-acid chain: Arginine repressor (153 aa).

The protein belongs to the ArgR family.

The protein localises to the cytoplasm. It participates in amino-acid biosynthesis; L-arginine biosynthesis [regulation]. Its function is as follows. Regulates arginine biosynthesis genes. The polypeptide is Arginine repressor (Acetivibrio thermocellus (strain ATCC 27405 / DSM 1237 / JCM 9322 / NBRC 103400 / NCIMB 10682 / NRRL B-4536 / VPI 7372) (Clostridium thermocellum)).